Here is a 470-residue protein sequence, read N- to C-terminus: 6-phospho-beta-glucosidase BglB (470 aa).

The active-site Proton donor is E172. The Nucleophile role is filled by E361.

Belongs to the glycosyl hydrolase 1 family.

It catalyses the reaction 6-phospho-beta-D-glucosyl-(1-&gt;4)-D-glucose + H2O = D-glucose 6-phosphate + D-glucose. Its function is as follows. Catalyzes the hydrolysis of phosphorylated beta-glucosides into glucose-6-phosphate (G-6-P) and aglycone. It has a high affinity for phosphorylated aromatic beta-glucosides (p-nitrophenyl-beta-glucoside, phenyl beta-glucoside, arbutin and phosphorylated salicin), and a low affinity for phosphorylated beta-methyl-glucoside. The sequence is that of 6-phospho-beta-glucosidase BglB (bglB) from Escherichia coli (strain K12).